The chain runs to 1034 residues: Probable isoleucine--tRNA ligase, mitochondrial (1034 aa).

Residues 1–32 constitute a mitochondrion transit peptide; sequence MISLNNSFFNKRVIVNSFNNYKRSFGTKSQNE. A 'HIGH' region motif is present at residues 94-104; the sequence is PYANGDLHMGH. A 'KMSKS' region motif is present at residues 655–659; that stretch reads KMSKS. K658 serves as a coordination point for ATP.

The protein belongs to the class-I aminoacyl-tRNA synthetase family.

The protein localises to the mitochondrion matrix. The catalysed reaction is tRNA(Ile) + L-isoleucine + ATP = L-isoleucyl-tRNA(Ile) + AMP + diphosphate. The chain is Probable isoleucine--tRNA ligase, mitochondrial (mileS) from Dictyostelium discoideum (Social amoeba).